The primary structure comprises 697 residues: Polyribonucleotide nucleotidyltransferase (697 aa).

Mg(2+) is bound by residues aspartate 488 and aspartate 494. One can recognise a KH domain in the interval 555–614; sequence PTLLTLKINPDKIRDVIGKGGATIRALTEETGCTIDIEDDGSVKIYGETREKADEAVRRV. An S1 motif domain is found at 624–692; that stretch reads GAIYEGKVTR…QRGRIKLSMK (69 aa).

This sequence belongs to the polyribonucleotide nucleotidyltransferase family. Component of the RNA degradosome, which is a multiprotein complex involved in RNA processing and mRNA degradation. Mg(2+) serves as cofactor.

The protein localises to the cytoplasm. The catalysed reaction is RNA(n+1) + phosphate = RNA(n) + a ribonucleoside 5'-diphosphate. Its function is as follows. Involved in mRNA degradation. Catalyzes the phosphorolysis of single-stranded polyribonucleotides processively in the 3'- to 5'-direction. The protein is Polyribonucleotide nucleotidyltransferase of Alcanivorax borkumensis (strain ATCC 700651 / DSM 11573 / NCIMB 13689 / SK2).